The primary structure comprises 311 residues: Ketoisovalerate oxidoreductase subunit VorB (311 aa).

As to quaternary structure, heterotetramer of one alpha, one beta, one delta and one gamma chain.

It catalyses the reaction 3-methyl-2-oxobutanoate + 2 oxidized [2Fe-2S]-[ferredoxin] + CoA = 2-methylpropanoyl-CoA + 2 reduced [2Fe-2S]-[ferredoxin] + CO2 + H(+). The polypeptide is Ketoisovalerate oxidoreductase subunit VorB (vorB) (Pyrococcus horikoshii (strain ATCC 700860 / DSM 12428 / JCM 9974 / NBRC 100139 / OT-3)).